The sequence spans 205 residues: Probable transcription factor Ken (205 aa).

3 C2H2-type zinc fingers span residues 106 to 128 (YRCE…LRVH), 134 to 157 (FACR…CSVH), and 173 to 196 (YSCC…SGHH).

It localises to the nucleus. In terms of biological role, probable transcription factor, which is required for terminalia development. This is Probable transcription factor Ken (ken) from Drosophila yakuba (Fruit fly).